The sequence spans 41 residues: MKALYMVFVLWVLIGCFLRLLKDEATVFGLWPLCSYRMLPF.

The signal sequence occupies residues 1–22 (MKALYMVFVLWVLIGCFLRLLK).

It is found in the secreted. May play a role in protection or detoxification. The chain is Submaxillary gland androgen-regulated protein 2, isoform beta (Smr2) from Mus musculus (Mouse).